Here is a 471-residue protein sequence, read N- to C-terminus: Vitellogenic carboxypeptidase (471 aa).

The signal sequence occupies residues 1 to 19; the sequence is MVKFHLLVLIAFTCYTCSD. N-linked (GlcNAc...) asparagine glycosylation occurs at asparagine 135. Residues serine 207, aspartate 391, and histidine 448 contribute to the active site.

The protein belongs to the peptidase S10 family. Synthesized in the fat body of vitellogenic females, secreted into the hemolymph and accumulates in yolk bodies of developing oocytes.

The protein resides in the secreted. Functionally, may play a role in activating hydrolytic enzymes that are involved in the degradation of yolk proteins in developing embryos or may function as an exopeptidase in the degradation of vitellogenin. In Aedes aegypti (Yellowfever mosquito), this protein is Vitellogenic carboxypeptidase (VCP).